The chain runs to 346 residues: NADH-ubiquinone oxidoreductase chain 2 (346 aa).

10 consecutive transmembrane segments (helical) span residues 25-45 (HWIL…PLIS), 52-72 (AIEA…LILF), 95-115 (CLML…HFWF), 124-144 (LITA…LLLL), 149-169 (LNTT…GWMG), 178-198 (ILAF…SYNP), 200-220 (LTIL…LSLA), 242-262 (ATVM…GFMP), 274-294 (EMTP…FFYL), and 326-346 (AILT…ITML).

The protein belongs to the complex I subunit 2 family. Core subunit of respiratory chain NADH dehydrogenase (Complex I) which is composed of 45 different subunits.

It localises to the mitochondrion inner membrane. The enzyme catalyses a ubiquinone + NADH + 5 H(+)(in) = a ubiquinol + NAD(+) + 4 H(+)(out). Core subunit of the mitochondrial membrane respiratory chain NADH dehydrogenase (Complex I) which catalyzes electron transfer from NADH through the respiratory chain, using ubiquinone as an electron acceptor. Essential for the catalytic activity and assembly of complex I. The protein is NADH-ubiquinone oxidoreductase chain 2 (MT-ND2) of Gallus gallus (Chicken).